The following is a 200-amino-acid chain: Dephospho-CoA kinase (200 aa).

The region spanning 4 to 200 (TIGLTGSVAT…TFIERFVNNK (197 aa)) is the DPCK domain. Position 12 to 17 (12 to 17 (ATGKST)) interacts with ATP.

Belongs to the CoaE family.

The protein localises to the cytoplasm. It catalyses the reaction 3'-dephospho-CoA + ATP = ADP + CoA + H(+). The protein operates within cofactor biosynthesis; coenzyme A biosynthesis; CoA from (R)-pantothenate: step 5/5. Catalyzes the phosphorylation of the 3'-hydroxyl group of dephosphocoenzyme A to form coenzyme A. In Listeria innocua serovar 6a (strain ATCC BAA-680 / CLIP 11262), this protein is Dephospho-CoA kinase.